Reading from the N-terminus, the 293-residue chain is 3-methyl-2-oxobutanoate hydroxymethyltransferase (293 aa).

The interval 1 to 25 (MTDSPTAGTPYGTLPPASPLPQRRP) is disordered. Positions 67 and 110 each coordinate Mg(2+). Residues 67–68 (DS), aspartate 110, and lysine 139 each bind 3-methyl-2-oxobutanoate. A Mg(2+)-binding site is contributed by glutamate 141. The Proton acceptor role is filled by glutamate 208.

Belongs to the PanB family. In terms of assembly, homodecamer; pentamer of dimers. Requires Mg(2+) as cofactor.

The protein resides in the cytoplasm. The enzyme catalyses 3-methyl-2-oxobutanoate + (6R)-5,10-methylene-5,6,7,8-tetrahydrofolate + H2O = 2-dehydropantoate + (6S)-5,6,7,8-tetrahydrofolate. It participates in cofactor biosynthesis; (R)-pantothenate biosynthesis; (R)-pantoate from 3-methyl-2-oxobutanoate: step 1/2. Its function is as follows. Catalyzes the reversible reaction in which hydroxymethyl group from 5,10-methylenetetrahydrofolate is transferred onto alpha-ketoisovalerate to form ketopantoate. This is 3-methyl-2-oxobutanoate hydroxymethyltransferase from Acidovorax sp. (strain JS42).